We begin with the raw amino-acid sequence, 134 residues long: Putative pre-16S rRNA nuclease (134 aa).

This sequence belongs to the YqgF nuclease family.

The protein localises to the cytoplasm. Could be a nuclease involved in processing of the 5'-end of pre-16S rRNA. The polypeptide is Putative pre-16S rRNA nuclease (Helicobacter pylori (strain HPAG1)).